We begin with the raw amino-acid sequence, 320 residues long: Malate dehydrogenase (320 aa).

NAD(+) is bound by residues 10–15 (GSGMIG) and D34. Substrate is bound by residues R83 and R89. NAD(+) is bound by residues N96 and 119-121 (ITN). Substrate-binding residues include N121 and R152. The active-site Proton acceptor is H176.

It belongs to the LDH/MDH superfamily. MDH type 3 family.

The catalysed reaction is (S)-malate + NAD(+) = oxaloacetate + NADH + H(+). Functionally, catalyzes the reversible oxidation of malate to oxaloacetate. This is Malate dehydrogenase from Rhizobium johnstonii (strain DSM 114642 / LMG 32736 / 3841) (Rhizobium leguminosarum bv. viciae).